The chain runs to 137 residues: MERTFVMIKPDGVRRGLVGEILARFERKGFRIAALKLMQISQELAERHYAEHREKPFFPGLVRFITSGPVVAMVLEGPGVVAEVRKMMGATHPKDALPGTIRGDFATTIDENVIHGSATLEDAQREIALFFRPEELL.

Residues K9, F57, R85, T91, R102, and N112 each contribute to the ATP site. Catalysis depends on H115, which acts as the Pros-phosphohistidine intermediate.

This sequence belongs to the NDK family. As to quaternary structure, homotetramer. The cofactor is Mg(2+).

It localises to the cytoplasm. The enzyme catalyses a 2'-deoxyribonucleoside 5'-diphosphate + ATP = a 2'-deoxyribonucleoside 5'-triphosphate + ADP. It carries out the reaction a ribonucleoside 5'-diphosphate + ATP = a ribonucleoside 5'-triphosphate + ADP. In terms of biological role, major role in the synthesis of nucleoside triphosphates other than ATP. The ATP gamma phosphate is transferred to the NDP beta phosphate via a ping-pong mechanism, using a phosphorylated active-site intermediate. In Thermus thermophilus (strain ATCC 27634 / DSM 579 / HB8), this protein is Nucleoside diphosphate kinase.